Consider the following 479-residue polypeptide: Sulfate adenylyltransferase subunit 1 (479 aa).

The region spanning Lys25 to Arg239 is the tr-type G domain. A G1 region spans residues Gly34–Ser41. GTP is bound at residue Gly34–Ser41. The interval Gly92–Asp96 is G2. The G3 stretch occupies residues Asp113–Gly116. Residues Asp113 to His117 and Asn168 to Asp171 contribute to the GTP site. Positions Asn168 to Asp171 are G4. A G5 region spans residues Ser206–Leu208.

The protein belongs to the TRAFAC class translation factor GTPase superfamily. Classic translation factor GTPase family. CysN/NodQ subfamily. In terms of assembly, heterodimer composed of CysD, the smaller subunit, and CysN.

The catalysed reaction is sulfate + ATP + H(+) = adenosine 5'-phosphosulfate + diphosphate. The protein operates within sulfur metabolism; hydrogen sulfide biosynthesis; sulfite from sulfate: step 1/3. In terms of biological role, with CysD forms the ATP sulfurylase (ATPS) that catalyzes the adenylation of sulfate producing adenosine 5'-phosphosulfate (APS) and diphosphate, the first enzymatic step in sulfur assimilation pathway. APS synthesis involves the formation of a high-energy phosphoric-sulfuric acid anhydride bond driven by GTP hydrolysis by CysN coupled to ATP hydrolysis by CysD. The protein is Sulfate adenylyltransferase subunit 1 of Salmonella paratyphi B (strain ATCC BAA-1250 / SPB7).